A 1758-amino-acid chain; its full sequence is RanBP2-like and GRIP domain-containing protein 3 (1758 aa).

A Phosphoserine modification is found at serine 21. A TPR 1 repeat occupies proline 60–glutamine 93. Residues arginine 176–arginine 229 are a coiled coil. One copy of the TPR 2 repeat lies at glutamine 584–isoleucine 617. The segment at glycine 761–alanine 805 is disordered. Residues serine 779–proline 798 show a composition bias toward low complexity. A coiled-coil region spans residues alanine 805–alanine 837. In terms of domain architecture, RanBD1 1 spans histidine 1037 to aspartate 1173. Disordered regions lie at residues valine 1216–glutamate 1248, alanine 1307–phenylalanine 1335, and asparagine 1581–serine 1622. A compositionally biased stretch (polar residues) spans isoleucine 1236–proline 1245. Acidic residues predominate over residues threonine 1318–arginine 1330. In terms of domain architecture, RanBD1 2 spans tyrosine 1334 to lysine 1470. Over residues asparagine 1581–glutamate 1594 the composition is skewed to polar residues. Basic and acidic residues predominate over residues serine 1595–valine 1618. In terms of domain architecture, GRIP spans glutamine 1703–valine 1753.

In Homo sapiens (Human), this protein is RanBP2-like and GRIP domain-containing protein 3 (RGPD3).